The chain runs to 401 residues: Splicing factor 45 (401 aa).

Ser-2 carries the N-acetylserine modification. Phosphoserine is present on Ser-2. A Glycyl lysine isopeptide (Lys-Gly) (interchain with G-Cter in SUMO2) cross-link involves residue Lys-15. Lys-21 carries the post-translational modification N6-acetyllysine. Glycyl lysine isopeptide (Lys-Gly) (interchain with G-Cter in SUMO2) cross-links involve residues Lys-24 and Lys-33. Lys-41 is modified (N6-acetyllysine; alternate). Lys-41 participates in a covalent cross-link: Glycyl lysine isopeptide (Lys-Gly) (interchain with G-Cter in SUMO2); alternate. Residues 57–68 (LKRGGSSDDRQI) are compositionally biased toward basic and acidic residues. Disordered stretches follow at residues 57–84 (LKRG…DPVP) and 114–233 (RQRE…FLAN). Lys-58 is covalently cross-linked (Glycyl lysine isopeptide (Lys-Gly) (interchain with G-Cter in SUMO2)). Thr-71 is subject to Phosphothreonine. Residues 114–153 (RQREERQRQRELERQKEIEEREKRRKDRHEASGFARRPDP) show a composition bias toward basic and acidic residues. A phosphoserine mark is found at Ser-155 and Ser-169. Basic and acidic residues predominate over residues 182-200 (VEKDKELPRDFPYEEDSRP). Ser-222 is subject to Phosphoserine. One can recognise a G-patch domain in the interval 235–283 (GGTVAHKIMQKYGFREGQGLGKHEQGLSTALSVEKTSKRGGKIIVGDAT). The residue at position 237 (Thr-237) is a Phosphothreonine. Lys-256 is covalently cross-linked (Glycyl lysine isopeptide (Lys-Gly) (interchain with G-Cter in SUMO2)). Residue Ser-266 is modified to Phosphoserine. A Glycyl lysine isopeptide (Lys-Gly) (interchain with G-Cter in SUMO2) cross-link involves residue Lys-276. Ser-291 and Ser-293 each carry phosphoserine. One can recognise an RRM domain in the interval 306–385 (VVLLRNMVGA…YFGGRVVKAC (80 aa)).

In terms of assembly, binds SXL. Associates with the spliceosome. Interacts with SF3B1, SF1 and U2AF2.

The protein localises to the nucleus. Splice factor that binds to the single-stranded 3'AG at the exon/intron border and promotes its utilization in the second catalytic step. Involved in the regulation of alternative splicing and the utilization of cryptic splice sites. Promotes the utilization of a cryptic splice site created by the beta-110 mutation in the HBB gene. The resulting frameshift leads to sickle cell anemia. In Homo sapiens (Human), this protein is Splicing factor 45 (RBM17).